The primary structure comprises 367 residues: Peptide chain release factor 2 (367 aa).

Residue Q250 is modified to N5-methylglutamine.

This sequence belongs to the prokaryotic/mitochondrial release factor family. Methylated by PrmC. Methylation increases the termination efficiency of RF2.

Its subcellular location is the cytoplasm. Its function is as follows. Peptide chain release factor 2 directs the termination of translation in response to the peptide chain termination codons UGA and UAA. In Saccharopolyspora erythraea (strain ATCC 11635 / DSM 40517 / JCM 4748 / NBRC 13426 / NCIMB 8594 / NRRL 2338), this protein is Peptide chain release factor 2.